The following is a 726-amino-acid chain: E3 SUMO-protein ligase SIZ2 (726 aa).

One can recognise an SAP domain in the interval 43 to 77 (MEQLKVLELKQICKSLDLSITGKKAVLQDRIKQFL). Positions 139–291 (TALPPYSQQQ…SISCFIVEVF (153 aa)) constitute a PINIT domain. Residues 323–408 (DDDDIITTST…IQNCNEDVEQ (86 aa)) form an SP-RING-type zinc finger. Residues cysteine 354, histidine 356, cysteine 377, and cysteine 380 each coordinate Zn(2+). A disordered region spans residues 507 to 533 (PSESEGSSDYNPNHTSTPKGSPTMDQD). A compositionally biased stretch (polar residues) spans 510-533 (SEGSSDYNPNHTSTPKGSPTMDQD).

The protein belongs to the PIAS family. In terms of assembly, interacts with CDC12. Autosumoylated upon ethanol stress.

It is found in the nucleus. Its pathway is protein modification; protein sumoylation. In terms of biological role, may act as an E3 ligase mediating SUMO/Smt3 attachment to septins. May be involved in chromosome maintenance. The polypeptide is E3 SUMO-protein ligase SIZ2 (NFI1) (Saccharomyces cerevisiae (strain ATCC 204508 / S288c) (Baker's yeast)).